The following is a 142-amino-acid chain: Large ribosomal subunit protein uL13 (142 aa).

The protein belongs to the universal ribosomal protein uL13 family. Part of the 50S ribosomal subunit.

This protein is one of the early assembly proteins of the 50S ribosomal subunit, although it is not seen to bind rRNA by itself. It is important during the early stages of 50S assembly. The polypeptide is Large ribosomal subunit protein uL13 (Shigella sonnei (strain Ss046)).